The following is a 227-amino-acid chain: Urease accessory protein UreF 2 (227 aa).

Belongs to the UreF family. In terms of assembly, ureD, UreF and UreG form a complex that acts as a GTP-hydrolysis-dependent molecular chaperone, activating the urease apoprotein by helping to assemble the nickel containing metallocenter of UreC. The UreE protein probably delivers the nickel.

It localises to the cytoplasm. Functionally, required for maturation of urease via the functional incorporation of the urease nickel metallocenter. This is Urease accessory protein UreF 2 from Brucella anthropi (strain ATCC 49188 / DSM 6882 / CCUG 24695 / JCM 21032 / LMG 3331 / NBRC 15819 / NCTC 12168 / Alc 37) (Ochrobactrum anthropi).